Consider the following 360-residue polypeptide: Molybdenum import ATP-binding protein ModC (360 aa).

Residues valine 5 to aspartate 234 enclose the ABC transporter domain. Glycine 32–threonine 39 lines the ATP pocket. A Mop domain is found at histidine 295–alanine 360.

Belongs to the ABC transporter superfamily. Molybdate importer (TC 3.A.1.8) family. The complex is composed of two ATP-binding proteins (ModC), two transmembrane proteins (ModB) and a solute-binding protein (ModA).

Its subcellular location is the cell inner membrane. The enzyme catalyses molybdate(out) + ATP + H2O = molybdate(in) + ADP + phosphate + H(+). Part of the ABC transporter complex ModABC involved in molybdenum import. Responsible for energy coupling to the transport system. The protein is Molybdenum import ATP-binding protein ModC of Pseudomonas fluorescens (strain ATCC BAA-477 / NRRL B-23932 / Pf-5).